Consider the following 183-residue polypeptide: Neuroblastoma suppressor of tumorigenicity 1 (183 aa).

An N-terminal signal peptide occupies residues 1–19; it reads MVMCVRAVLVCVLLELSRA. 5 cysteine pairs are disulfide-bonded: Cys-38–Cys-88, Cys-52–Cys-102, Cys-62–Cys-121, Cys-66–Cys-123, and Cys-85–Cys-126. Residues 38-127 enclose the CTCK domain; the sequence is CEAKNITQIV…ILHCSCQSCS (90 aa). The tract at residues 145–170 is disordered; sequence AQDLPSLPDATHTHPQHAHMQADQRD.

It belongs to the DAN family.

The protein localises to the secreted. Functionally, may act as a tumor suppressor. This Danio rerio (Zebrafish) protein is Neuroblastoma suppressor of tumorigenicity 1 (nbl1).